We begin with the raw amino-acid sequence, 419 residues long: UDP-N-acetylglucosamine 1-carboxyvinyltransferase (419 aa).

A phosphoenolpyruvate-binding site is contributed by 22–23; it reads KN. Arg91 is a UDP-N-acetyl-alpha-D-glucosamine binding site. Cys115 functions as the Proton donor in the catalytic mechanism. At Cys115 the chain carries 2-(S-cysteinyl)pyruvic acid O-phosphothioketal. Residues 120–124, 160–163, Asp305, and Ile327 contribute to the UDP-N-acetyl-alpha-D-glucosamine site; these read RPVDL and KVSV.

Belongs to the EPSP synthase family. MurA subfamily.

It localises to the cytoplasm. It carries out the reaction phosphoenolpyruvate + UDP-N-acetyl-alpha-D-glucosamine = UDP-N-acetyl-3-O-(1-carboxyvinyl)-alpha-D-glucosamine + phosphate. The protein operates within cell wall biogenesis; peptidoglycan biosynthesis. Its function is as follows. Cell wall formation. Adds enolpyruvyl to UDP-N-acetylglucosamine. The protein is UDP-N-acetylglucosamine 1-carboxyvinyltransferase of Klebsiella pneumoniae subsp. pneumoniae (strain ATCC 700721 / MGH 78578).